The chain runs to 291 residues: Meteorin (291 aa).

The signal sequence occupies residues 1-21; sequence MLVAALLCALCCGLLAASARA. Cystine bridges form between C28–C49, C80–C116, C169–C240, C172–C264, and C182–C286.

Belongs to the meteorin family. In terms of assembly, monomer.

It localises to the secreted. Involved in both glial cell differentiation and axonal network formation during neurogenesis. Promotes astrocyte differentiation and transforms cerebellar astrocytes into radial glia. Also induces axonal extension in small and intermediate neurons of sensory ganglia by activating nearby satellite glia. The protein is Meteorin (Metrn) of Rattus norvegicus (Rat).